A 260-amino-acid chain; its full sequence is Ribonuclease HII (260 aa).

The 188-residue stretch at 73–260 (LHIAGIDEAG…APVQQQLDIV (188 aa)) folds into the RNase H type-2 domain. Residues aspartate 79, glutamate 80, and aspartate 171 each contribute to the a divalent metal cation site.

Belongs to the RNase HII family. The cofactor is Mn(2+). Mg(2+) serves as cofactor.

It localises to the cytoplasm. It catalyses the reaction Endonucleolytic cleavage to 5'-phosphomonoester.. Its function is as follows. Endonuclease that specifically degrades the RNA of RNA-DNA hybrids. In Desulfitobacterium hafniense (strain Y51), this protein is Ribonuclease HII.